A 374-amino-acid polypeptide reads, in one-letter code: Pyruvate dehydrogenase E1 component subunit beta-1, mitochondrial (374 aa).

The transit peptide at 1 to 34 directs the protein to the mitochondrion; it reads MLGIARRRLGSGCALGQLMQALRPAAAAAAARTY. Glu-97 is a binding site for thiamine diphosphate. Ile-150, Ala-198, Ile-199, and Asp-201 together coordinate K(+).

In terms of assembly, tetramer of 2 alpha and 2 beta subunits. Thiamine diphosphate serves as cofactor.

Its subcellular location is the mitochondrion matrix. The catalysed reaction is N(6)-[(R)-lipoyl]-L-lysyl-[protein] + pyruvate + H(+) = N(6)-[(R)-S(8)-acetyldihydrolipoyl]-L-lysyl-[protein] + CO2. The pyruvate dehydrogenase complex catalyzes the overall conversion of pyruvate to acetyl-CoA and CO(2). It contains multiple copies of three enzymatic components: pyruvate dehydrogenase (E1), dihydrolipoamide acetyltransferase (E2) and lipoamide dehydrogenase (E3). This is Pyruvate dehydrogenase E1 component subunit beta-1, mitochondrial from Oryza sativa subsp. japonica (Rice).